The chain runs to 280 residues: Acetylglutamate kinase (280 aa).

Substrate-binding positions include 64 to 65 (GG), R86, and N177.

It belongs to the acetylglutamate kinase family. ArgB subfamily.

The protein localises to the cytoplasm. The catalysed reaction is N-acetyl-L-glutamate + ATP = N-acetyl-L-glutamyl 5-phosphate + ADP. It participates in amino-acid biosynthesis; L-arginine biosynthesis; N(2)-acetyl-L-ornithine from L-glutamate: step 2/4. Its function is as follows. Catalyzes the ATP-dependent phosphorylation of N-acetyl-L-glutamate. This is Acetylglutamate kinase from Nautilia profundicola (strain ATCC BAA-1463 / DSM 18972 / AmH).